We begin with the raw amino-acid sequence, 226 residues long: Leucyl/phenylalanyl-tRNA--protein transferase (226 aa).

This sequence belongs to the L/F-transferase family.

It localises to the cytoplasm. The enzyme catalyses N-terminal L-lysyl-[protein] + L-leucyl-tRNA(Leu) = N-terminal L-leucyl-L-lysyl-[protein] + tRNA(Leu) + H(+). The catalysed reaction is N-terminal L-arginyl-[protein] + L-leucyl-tRNA(Leu) = N-terminal L-leucyl-L-arginyl-[protein] + tRNA(Leu) + H(+). It catalyses the reaction L-phenylalanyl-tRNA(Phe) + an N-terminal L-alpha-aminoacyl-[protein] = an N-terminal L-phenylalanyl-L-alpha-aminoacyl-[protein] + tRNA(Phe). In terms of biological role, functions in the N-end rule pathway of protein degradation where it conjugates Leu, Phe and, less efficiently, Met from aminoacyl-tRNAs to the N-termini of proteins containing an N-terminal arginine or lysine. This Pseudomonas putida (strain W619) protein is Leucyl/phenylalanyl-tRNA--protein transferase.